The sequence spans 364 residues: Fructose-1,6-bisphosphatase class 1 3 (364 aa).

Residues glutamate 101, aspartate 123, leucine 125, and aspartate 126 each contribute to the Mg(2+) site. Substrate is bound by residues 126-129 (DGSS) and asparagine 218. Mg(2+) is bound at residue glutamate 290.

This sequence belongs to the FBPase class 1 family. Homotetramer. Mg(2+) serves as cofactor.

Its subcellular location is the cytoplasm. The catalysed reaction is beta-D-fructose 1,6-bisphosphate + H2O = beta-D-fructose 6-phosphate + phosphate. It participates in carbohydrate biosynthesis; gluconeogenesis. This is Fructose-1,6-bisphosphatase class 1 3 from Cupriavidus necator (strain ATCC 17699 / DSM 428 / KCTC 22496 / NCIMB 10442 / H16 / Stanier 337) (Ralstonia eutropha).